The primary structure comprises 380 residues: 1-deoxy-D-xylulose 5-phosphate reductoisomerase (380 aa).

NADPH-binding residues include Thr-10, Gly-11, Ser-12, Ile-13, Gly-35, and Asn-121. Lys-122 serves as a coordination point for 1-deoxy-D-xylulose 5-phosphate. Glu-123 is an NADPH binding site. Asp-147 serves as a coordination point for Mn(2+). Residues Ser-148, Glu-149, Ser-173, and His-196 each contribute to the 1-deoxy-D-xylulose 5-phosphate site. Glu-149 serves as a coordination point for Mn(2+). Gly-202 provides a ligand contact to NADPH. 1-deoxy-D-xylulose 5-phosphate contacts are provided by Ser-209, Asn-214, Lys-215, and Glu-218. Position 218 (Glu-218) interacts with Mn(2+).

The protein belongs to the DXR family. The cofactor is Mg(2+). Mn(2+) is required as a cofactor.

It carries out the reaction 2-C-methyl-D-erythritol 4-phosphate + NADP(+) = 1-deoxy-D-xylulose 5-phosphate + NADPH + H(+). It functions in the pathway isoprenoid biosynthesis; isopentenyl diphosphate biosynthesis via DXP pathway; isopentenyl diphosphate from 1-deoxy-D-xylulose 5-phosphate: step 1/6. In terms of biological role, catalyzes the NADPH-dependent rearrangement and reduction of 1-deoxy-D-xylulose-5-phosphate (DXP) to 2-C-methyl-D-erythritol 4-phosphate (MEP). This is 1-deoxy-D-xylulose 5-phosphate reductoisomerase from Lachnospira eligens (strain ATCC 27750 / DSM 3376 / VPI C15-48 / C15-B4) (Eubacterium eligens).